The primary structure comprises 119 residues: Large ribosomal subunit protein bL20 (119 aa).

The protein belongs to the bacterial ribosomal protein bL20 family.

In terms of biological role, binds directly to 23S ribosomal RNA and is necessary for the in vitro assembly process of the 50S ribosomal subunit. It is not involved in the protein synthesizing functions of that subunit. The chain is Large ribosomal subunit protein bL20 from Bacillus licheniformis (strain ATCC 14580 / DSM 13 / JCM 2505 / CCUG 7422 / NBRC 12200 / NCIMB 9375 / NCTC 10341 / NRRL NRS-1264 / Gibson 46).